Here is a 196-residue protein sequence, read N- to C-terminus: MSLPLVLGSSSPRRKFILEKFRVPFTVIPSNFDESKVSYSGDPIAYTQELAAQKAYAVSELHSPCDCIILTGDTIVSYDGRIFTKPQDKADAIQMLKTLRNQTHDVVTSIAVLHKGKLLTGSETSQISLTMIPDHRIESYIDTVGTLNNCGAYDVCHGGLILKKVHGCVYNVQGLPIQTLKYLLEELNIDLWDYSI.

D73 functions as the Proton acceptor in the catalytic mechanism.

It belongs to the Maf family. Requires a divalent metal cation as cofactor.

It localises to the cytoplasm. It catalyses the reaction a ribonucleoside 5'-triphosphate + H2O = a ribonucleoside 5'-phosphate + diphosphate + H(+). The enzyme catalyses a 2'-deoxyribonucleoside 5'-triphosphate + H2O = a 2'-deoxyribonucleoside 5'-phosphate + diphosphate + H(+). Its function is as follows. Nucleoside triphosphate pyrophosphatase. May have a dual role in cell division arrest and in preventing the incorporation of modified nucleotides into cellular nucleic acids. This is Nucleoside triphosphate pyrophosphatase from Chlamydia pneumoniae (Chlamydophila pneumoniae).